We begin with the raw amino-acid sequence, 68 residues long: Phage-like element PBSX protein XtrA (68 aa).

This sequence to B.subtilis YqaO.

The sequence is that of Phage-like element PBSX protein XtrA (xtrA) from Bacillus subtilis (strain 168).